A 221-amino-acid polypeptide reads, in one-letter code: uncharacterized protein (221 aa).

The span at 1-11 (MGEKSRRKGPA) shows a compositional bias: basic residues. Disordered stretches follow at residues 1-23 (MGEK…GRTC) and 139-169 (SNFQ…SAPE). Composition is skewed to basic and acidic residues over residues 13–23 (RHADGKLGRTC) and 155–168 (DKRS…RSAP).

This is an uncharacterized protein from Homo sapiens (Human).